The sequence spans 594 residues: UvrABC system protein C (594 aa).

Residues 14-91 form the GIY-YIG domain; that stretch reads DQPGCYLMKD…IKKHDPKYNI (78 aa). Residues 196-231 enclose the UVR domain; sequence KEVRSELETKMYEASEKLEFERAKELRDQIAHIDAI.

Belongs to the UvrC family. As to quaternary structure, interacts with UvrB in an incision complex.

The protein localises to the cytoplasm. In terms of biological role, the UvrABC repair system catalyzes the recognition and processing of DNA lesions. UvrC both incises the 5' and 3' sides of the lesion. The N-terminal half is responsible for the 3' incision and the C-terminal half is responsible for the 5' incision. The sequence is that of UvrABC system protein C from Bacillus cereus (strain AH187).